A 305-amino-acid chain; its full sequence is Virulence plasmid integrase pGP7-D (305 aa).

The Core-binding (CB) domain occupies 13 to 99 (LTFGEASEIW…CYISFTKFLY (87 aa)). The region spanning 127–303 (VKTVSISKKE…GNSSVANIPT (177 aa)) is the Tyr recombinase domain. Residues Lys-188 and Arg-257 contribute to the active site. The active-site O-(3'-phospho-DNA)-tyrosine intermediate is Tyr-289.

The protein belongs to the 'phage' integrase family.

The protein is Virulence plasmid integrase pGP7-D of Chlamydia muridarum (strain MoPn / Nigg).